The primary structure comprises 1359 residues: Regulatory-associated protein of TOR 2 (1359 aa).

2 disordered regions span residues 17–64 and 782–819; these read SSAA…PQVA and SDNSATARDGRISTSSPIATNSIMHGSPQSDDSSQHSD. The segment covering 32-50 has biased composition (basic and acidic residues); sequence HLVDDHLPVENGPDPRRDV. Residues 782-805 show a composition bias toward polar residues; the sequence is SDNSATARDGRISTSSPIATNSIM. Residues 806 to 819 show a composition bias toward low complexity; sequence HGSPQSDDSSQHSD. 7 WD repeats span residues 1041–1080, 1087–1127, 1139–1178, 1181–1221, 1228–1269, 1273–1312, and 1321–1359; these read RFELGTKASLLLPFSPIVVAADENEQIRVWNYDDALPVNT, SDRG…GGQK, RSAGRSIVFDWQQQSGYLYASGDMSSILVWDLDKEQVNTI, TADS…RLVY, PRSE…EPYL, AHRGSLTALAVHRHAPVIASGSAKQMIKVFSLEGEQLTII, and QRIGSVNCLSFHRYKSLLAAGAGDNALVSIYAEDNYQVR.

Belongs to the WD repeat RAPTOR family. As to quaternary structure, the target of rapamycin complex 1 (TORC1) is composed of at least RAPTOR, LST8 and TOR.

Component of TORC1 complex, which is an essential cell growth regulator that controls plant development. Acts by recruiting substrates for TOR. Acts by activating transcription, protein synthesis and ribosome biogenesis, and inhibiting mRNA degradation and autophagy. The protein is Regulatory-associated protein of TOR 2 (RAPTOR2) of Oryza sativa subsp. japonica (Rice).